A 317-amino-acid chain; its full sequence is Aspartate carbamoyltransferase catalytic subunit (317 aa).

Carbamoyl phosphate is bound by residues Arg-55 and Thr-56. Residue Lys-83 coordinates L-aspartate. Carbamoyl phosphate is bound by residues Arg-105, His-138, and Gln-141. The L-aspartate site is built by Arg-171 and Arg-225. 2 residues coordinate carbamoyl phosphate: Gly-266 and Pro-267.

Belongs to the aspartate/ornithine carbamoyltransferase superfamily. ATCase family. In terms of assembly, heterododecamer (2C3:3R2) of six catalytic PyrB chains organized as two trimers (C3), and six regulatory PyrI chains organized as three dimers (R2).

The catalysed reaction is carbamoyl phosphate + L-aspartate = N-carbamoyl-L-aspartate + phosphate + H(+). It functions in the pathway pyrimidine metabolism; UMP biosynthesis via de novo pathway; (S)-dihydroorotate from bicarbonate: step 2/3. Its function is as follows. Catalyzes the condensation of carbamoyl phosphate and aspartate to form carbamoyl aspartate and inorganic phosphate, the committed step in the de novo pyrimidine nucleotide biosynthesis pathway. The protein is Aspartate carbamoyltransferase catalytic subunit of Mycobacteroides abscessus (strain ATCC 19977 / DSM 44196 / CCUG 20993 / CIP 104536 / JCM 13569 / NCTC 13031 / TMC 1543 / L948) (Mycobacterium abscessus).